We begin with the raw amino-acid sequence, 290 residues long: 6-phospho-5-dehydro-2-deoxy-D-gluconate aldolase (290 aa).

Aspartate 85 (proton donor) is an active-site residue. Zn(2+) contacts are provided by histidine 86 and histidine 180. Glycine 181 provides a ligand contact to dihydroxyacetone phosphate. Histidine 208 contacts Zn(2+). Dihydroxyacetone phosphate is bound by residues 209–211 and 230–233; these read GAS and NINT. Threonine 233 carries the post-translational modification Phosphothreonine.

This sequence belongs to the class II fructose-bisphosphate aldolase family. IolJ subfamily. Zn(2+) is required as a cofactor.

It catalyses the reaction 6-phospho-5-dehydro-2-deoxy-D-gluconate = 3-oxopropanoate + dihydroxyacetone phosphate. It functions in the pathway polyol metabolism; myo-inositol degradation into acetyl-CoA; acetyl-CoA from myo-inositol: step 6/7. Functionally, produces dihydroxyacetone phosphate (DHAP or glycerone phosphate) and malonic semialdehyde (MSA or 3-oxopropanoate) from 6-phospho-5-dehydro-2-deoxy-D-gluconate (DKGP). In Bacillus velezensis (strain DSM 23117 / BGSC 10A6 / LMG 26770 / FZB42) (Bacillus amyloliquefaciens subsp. plantarum), this protein is 6-phospho-5-dehydro-2-deoxy-D-gluconate aldolase (iolJ).